Reading from the N-terminus, the 1372-residue chain is DNA-directed RNA polymerase subunit beta' (1372 aa).

Zn(2+)-binding residues include cysteine 69, cysteine 71, cysteine 84, and cysteine 87. Aspartate 460, aspartate 462, and aspartate 464 together coordinate Mg(2+). 4 residues coordinate Zn(2+): cysteine 808, cysteine 882, cysteine 889, and cysteine 892.

It belongs to the RNA polymerase beta' chain family. In terms of assembly, the RNAP catalytic core consists of 2 alpha, 1 beta, 1 beta' and 1 omega subunit. When a sigma factor is associated with the core the holoenzyme is formed, which can initiate transcription. It depends on Mg(2+) as a cofactor. The cofactor is Zn(2+).

It carries out the reaction RNA(n) + a ribonucleoside 5'-triphosphate = RNA(n+1) + diphosphate. Functionally, DNA-dependent RNA polymerase catalyzes the transcription of DNA into RNA using the four ribonucleoside triphosphates as substrates. The protein is DNA-directed RNA polymerase subunit beta' of Rickettsia typhi (strain ATCC VR-144 / Wilmington).